A 445-amino-acid polypeptide reads, in one-letter code: Proline--tRNA ligase (445 aa).

The protein belongs to the class-II aminoacyl-tRNA synthetase family. ProS type 2 subfamily. Homodimer.

The protein resides in the cytoplasm. It carries out the reaction tRNA(Pro) + L-proline + ATP = L-prolyl-tRNA(Pro) + AMP + diphosphate. Its function is as follows. Catalyzes the attachment of proline to tRNA(Pro) in a two-step reaction: proline is first activated by ATP to form Pro-AMP and then transferred to the acceptor end of tRNA(Pro). This Cereibacter sphaeroides (strain ATCC 17029 / ATH 2.4.9) (Rhodobacter sphaeroides) protein is Proline--tRNA ligase.